A 536-amino-acid polypeptide reads, in one-letter code: Atrial natriuretic peptide receptor 3 (536 aa).

The N-terminal stretch at 1 to 26 is a signal peptide; it reads MRSLLLFTFSACVLLARVLLAGGASS. Residues 27 to 40 constitute a propeptide that is removed on maturation; it reads GAGDTRPGSRRRAR. Residues 41–478 lie on the Extracellular side of the membrane; sequence EALAAQKIEV…KSSGGLEESA (438 aa). N-linked (GlcNAc...) asparagine glycosylation occurs at asparagine 81. Serine 101, valine 130, and cysteine 131 together coordinate chloride. 2 cysteine pairs are disulfide-bonded: cysteine 103–cysteine 131 and cysteine 208–cysteine 256. N-linked (GlcNAc...) asparagine glycosylation is found at asparagine 288 and asparagine 389. Residues 479–499 traverse the membrane as a helical segment; the sequence is VTGIVVGALLGAGLLMAFYFF. At 500–536 the chain is on the cytoplasmic side; it reads RKKYRITIERRNQQEESNIGKHRELREDSIRSHFSVA.

Belongs to the ANF receptor family. In terms of assembly, homodimer; disulfide-linked. Interacts with OSTN.

Its subcellular location is the cell membrane. In terms of biological role, receptor for the natriuretic peptide hormones, binding with similar affinities atrial natriuretic peptide NPPA/ANP, brain natriuretic peptide NPPB/BNP, and C-type natriuretic peptide NPPC/CNP. May function as a clearance receptor for NPPA, NPPB and NPPC, regulating their local concentrations and effects. Acts as a regulator of osteoblast differentiation and bone growth by binding to its ligand osteocrin, thereby preventing binding between NPR3/NPR-C and natriuretic peptides, leading to increase cGMP production. This chain is Atrial natriuretic peptide receptor 3 (Npr3), found in Mus musculus (Mouse).